We begin with the raw amino-acid sequence, 207 residues long: ATP-dependent Clp protease proteolytic subunit (207 aa).

The active-site Nucleophile is Ser111. Residue His136 is part of the active site.

The protein belongs to the peptidase S14 family. Fourteen ClpP subunits assemble into 2 heptameric rings which stack back to back to give a disk-like structure with a central cavity, resembling the structure of eukaryotic proteasomes.

It is found in the cytoplasm. The catalysed reaction is Hydrolysis of proteins to small peptides in the presence of ATP and magnesium. alpha-casein is the usual test substrate. In the absence of ATP, only oligopeptides shorter than five residues are hydrolyzed (such as succinyl-Leu-Tyr-|-NHMec, and Leu-Tyr-Leu-|-Tyr-Trp, in which cleavage of the -Tyr-|-Leu- and -Tyr-|-Trp bonds also occurs).. Cleaves peptides in various proteins in a process that requires ATP hydrolysis. Has a chymotrypsin-like activity. Plays a major role in the degradation of misfolded proteins. In Aliivibrio fischeri (strain ATCC 700601 / ES114) (Vibrio fischeri), this protein is ATP-dependent Clp protease proteolytic subunit.